We begin with the raw amino-acid sequence, 213 residues long: Na(+)-translocating NADH-quinone reductase subunit E (213 aa).

The next 6 helical transmembrane spans lie at 12–32, 40–60, 92–112, 124–144, 155–175, and 191–211; these read AVFV…FLAV, IGLG…NQLI, FLGF…LEMF, LGIF…SLFM, VVFG…LAGI, and LGIT…FSGI.

Belongs to the NqrDE/RnfAE family. As to quaternary structure, composed of six subunits; NqrA, NqrB, NqrC, NqrD, NqrE and NqrF.

It localises to the cell inner membrane. The catalysed reaction is a ubiquinone + n Na(+)(in) + NADH + H(+) = a ubiquinol + n Na(+)(out) + NAD(+). Its function is as follows. NQR complex catalyzes the reduction of ubiquinone-1 to ubiquinol by two successive reactions, coupled with the transport of Na(+) ions from the cytoplasm to the periplasm. NqrA to NqrE are probably involved in the second step, the conversion of ubisemiquinone to ubiquinol. In Rhodopirellula baltica (strain DSM 10527 / NCIMB 13988 / SH1), this protein is Na(+)-translocating NADH-quinone reductase subunit E.